The primary structure comprises 227 residues: Cytochrome c oxidase subunit 2 (227 aa).

Topologically, residues Met1 to Ser14 are mitochondrial intermembrane. Residues Pro15 to Met45 traverse the membrane as a helical segment. The Mitochondrial matrix segment spans residues Leu46–Gln59. The helical transmembrane segment at Glu60–Met87 threads the bilayer. Residues Asp88–Ile227 are Mitochondrial intermembrane-facing. 6 residues coordinate Cu cation: His161, Cys196, Glu198, Cys200, His204, and Met207. Glu198 provides a ligand contact to Mg(2+). Tyr218 is modified (phosphotyrosine).

This sequence belongs to the cytochrome c oxidase subunit 2 family. Component of the cytochrome c oxidase (complex IV, CIV), a multisubunit enzyme composed of 14 subunits. The complex is composed of a catalytic core of 3 subunits MT-CO1, MT-CO2 and MT-CO3, encoded in the mitochondrial DNA, and 11 supernumerary subunits COX4I, COX5A, COX5B, COX6A, COX6B, COX6C, COX7A, COX7B, COX7C, COX8 and NDUFA4, which are encoded in the nuclear genome. The complex exists as a monomer or a dimer and forms supercomplexes (SCs) in the inner mitochondrial membrane with NADH-ubiquinone oxidoreductase (complex I, CI) and ubiquinol-cytochrome c oxidoreductase (cytochrome b-c1 complex, complex III, CIII), resulting in different assemblies (supercomplex SCI(1)III(2)IV(1) and megacomplex MCI(2)III(2)IV(2)). Found in a complex with TMEM177, COA6, COX18, COX20, SCO1 and SCO2. Interacts with TMEM177 in a COX20-dependent manner. Interacts with COX20. Interacts with COX16. The cofactor is Cu cation.

It is found in the mitochondrion inner membrane. It carries out the reaction 4 Fe(II)-[cytochrome c] + O2 + 8 H(+)(in) = 4 Fe(III)-[cytochrome c] + 2 H2O + 4 H(+)(out). Its function is as follows. Component of the cytochrome c oxidase, the last enzyme in the mitochondrial electron transport chain which drives oxidative phosphorylation. The respiratory chain contains 3 multisubunit complexes succinate dehydrogenase (complex II, CII), ubiquinol-cytochrome c oxidoreductase (cytochrome b-c1 complex, complex III, CIII) and cytochrome c oxidase (complex IV, CIV), that cooperate to transfer electrons derived from NADH and succinate to molecular oxygen, creating an electrochemical gradient over the inner membrane that drives transmembrane transport and the ATP synthase. Cytochrome c oxidase is the component of the respiratory chain that catalyzes the reduction of oxygen to water. Electrons originating from reduced cytochrome c in the intermembrane space (IMS) are transferred via the dinuclear copper A center (CU(A)) of subunit 2 and heme A of subunit 1 to the active site in subunit 1, a binuclear center (BNC) formed by heme A3 and copper B (CU(B)). The BNC reduces molecular oxygen to 2 water molecules using 4 electrons from cytochrome c in the IMS and 4 protons from the mitochondrial matrix. The protein is Cytochrome c oxidase subunit 2 (MT-CO2) of Maxomys surifer (Indomalayan maxomys).